Reading from the N-terminus, the 499-residue chain is Endoglucanase (499 aa).

Residues 1–29 (MKRSISIFITCLLITLLTMGGMIASPASA) form the signal peptide. Substrate contacts are provided by residues His-65, 69-70 (WY), Tyr-96, and His-131. Glu-169 (proton donor) is an active-site residue. A substrate-binding site is contributed by Tyr-231. Glu-257 (nucleophile) is an active-site residue. Substrate-binding positions include 263 to 264 (AS), Trp-291, and 296 to 298 (KQE). The 150-residue stretch at 350–499 (QENGISVQYR…GKLIWGTEPN (150 aa)) folds into the CBM3 domain.

It belongs to the glycosyl hydrolase 5 (cellulase A) family.

The enzyme catalyses Endohydrolysis of (1-&gt;4)-beta-D-glucosidic linkages in cellulose, lichenin and cereal beta-D-glucans.. The sequence is that of Endoglucanase (eglS) from Bacillus subtilis (strain 168).